The following is a 972-amino-acid chain: 116 kDa U5 small nuclear ribonucleoprotein component (972 aa).

Residues 1-53 (MDTDLYDEFGNYIGPELDSDDEDDELGRESKELDELEDDDDDDDMGDHDEDHP) are disordered. Acidic residues-rich tracts occupy residues 17-26 (LDSDDEDDEL) and 34-48 (DELE…MGDH). A tr-type G domain is found at 127-409 (ELIRNVTLCG…GIHLTKEELK (283 aa)). Residues 136-143 (GHLHHGKT), 204-208 (DTPGH), and 258-261 (NKID) contribute to the GTP site.

Belongs to the TRAFAC class translation factor GTPase superfamily. Classic translation factor GTPase family. EF-G/EF-2 subfamily. As to quaternary structure, component of the U5 snRNP and the U4/U6-U5 tri-snRNP complex, a building block of the spliceosome. Component of the pre-catalytic, catalytic and post-catalytic spliceosome complexes. Component of the minor spliceosome, which splices U12-type introns.

It is found in the nucleus. In terms of biological role, required for pre-mRNA splicing as component of the spliceosome, including pre-catalytic, catalytic and post-catalytic spliceosomal complexes. Component of the U5 snRNP and the U4/U6-U5 tri-snRNP complex, a building block of the spliceosome. As a component of the minor spliceosome, involved in the splicing of U12-type introns in pre-mRNAs. The protein is 116 kDa U5 small nuclear ribonucleoprotein component (EFTUD2) of Gallus gallus (Chicken).